A 138-amino-acid chain; its full sequence is MLMPKRTKFRKQQKGQFAGLSKGATFVDFGEYAMQTLERGWVTSRQIEACRVAINRYLKRRGKVWIRIFPDKSVTKKPAETRMGKGKGAPDHWVAVVRPGRILFEVANVSKEDAQDALRRAAAKLGIKTRFVKRVERV.

It belongs to the universal ribosomal protein uL16 family. As to quaternary structure, part of the 50S ribosomal subunit.

Its function is as follows. Binds 23S rRNA and is also seen to make contacts with the A and possibly P site tRNAs. This Chlamydia pneumoniae (Chlamydophila pneumoniae) protein is Large ribosomal subunit protein uL16.